Here is a 150-residue protein sequence, read N- to C-terminus: Protein Turandot X (150 aa).

Positions methionine 1–alanine 22 are cleaved as a signal peptide. The interval arginine 127–lysine 150 is disordered. The span at serine 132–lysine 150 shows a compositional bias: polar residues.

This sequence belongs to the Turandot family.

It localises to the secreted. Its function is as follows. A humoral factor that may play a role in stress tolerance. The sequence is that of Protein Turandot X from Drosophila simulans (Fruit fly).